A 387-amino-acid polypeptide reads, in one-letter code: Protein TsgA homolog (387 aa).

12 consecutive transmembrane segments (helical) span residues 11–31 (WISF…GMIM), 47–67 (NIFT…SWLI), 76–96 (LIFG…STSI), 101–121 (INIF…TFII), 134–154 (LLLT…ISAY), 160–180 (ILWY…FILT), 205–225 (IILL…FISW), 243–263 (VLVS…SFII), 271–291 (MFIF…YSKS), 299–319 (IISL…LASL), 331–351 (LILF…SPIV), and 358–378 (TTLI…CIIF).

Belongs to the major facilitator superfamily. TsgA family.

It is found in the cell membrane. This Buchnera aphidicola subsp. Schizaphis graminum (strain Sg) protein is Protein TsgA homolog.